The chain runs to 264 residues: MIKVPRFICMIALTSGILASGLSQSVSAHTEKSEPSSTYHFHSDPLLYLAPPPTSGSPLQAHDDQTFNSTRQLKGSTRWALATQDADLHLASVLKDYACAAGMNLDIAQLPHLANLIKRALRTEYDDIGRAKNNWNRKRPFVDTDQPICTEKDREGLGKQGSYPSGHTTIGWSVALILAELIPDHAANILQRGQIFGTSRIVCGAHWFSDVQAGYIMASGEIAALHGDADFRRDMELARKELEKARTSAHTPDDLLCKIEQSAR.

Residues 1 to 28 form the signal peptide; it reads MIKVPRFICMIALTSGILASGLSQSVSA.

The protein belongs to the class A bacterial acid phosphatase family. It depends on Mg(2+) as a cofactor. Zn(2+) serves as cofactor.

It localises to the periplasm. The catalysed reaction is a phosphate monoester + H2O = an alcohol + phosphate. The sequence is that of Acid phosphatase (phoC) from Zymomonas mobilis subsp. mobilis (strain ATCC 31821 / ZM4 / CP4).